A 141-amino-acid polypeptide reads, in one-letter code: Protein C19orf12 homolog (141 aa).

A helical membrane pass occupies residues 37–57 (GLAFAGGLIGGPLGIAVGGAV).

The protein belongs to the C19orf12 family.

The protein resides in the mitochondrion. It is found in the mitochondrion membrane. It localises to the endoplasmic reticulum. The protein localises to the cytoplasm. Its subcellular location is the cytosol. This chain is Protein C19orf12 homolog, found in Danio rerio (Zebrafish).